A 225-amino-acid chain; its full sequence is 7-cyano-7-deazaguanine synthase (225 aa).

Position 7-17 (7-17 (LSGGMDSTTLL)) interacts with ATP. Residues Cys183, Cys191, Cys194, and Cys197 each coordinate Zn(2+).

The protein belongs to the QueC family. Homodimer. Zn(2+) serves as cofactor.

It carries out the reaction 7-carboxy-7-deazaguanine + NH4(+) + ATP = 7-cyano-7-deazaguanine + ADP + phosphate + H2O + H(+). Its pathway is purine metabolism; 7-cyano-7-deazaguanine biosynthesis. Catalyzes the ATP-dependent conversion of 7-carboxy-7-deazaguanine (CDG) to 7-cyano-7-deazaguanine (preQ(0)). This chain is 7-cyano-7-deazaguanine synthase, found in Caldicellulosiruptor saccharolyticus (strain ATCC 43494 / DSM 8903 / Tp8T 6331).